Reading from the N-terminus, the 348-residue chain is GMP reductase (348 aa).

NADP(+) is bound at residue 108–131; sequence ADFQKTKDVMALSDELIFICIDIA. K(+) is bound by residues Gly-181 and Gly-183. Cys-186 acts as the Thioimidate intermediate in catalysis. Residue 216-239 participates in NADP(+) binding; the sequence is IIGDGGCACAGDVAKAFGGGADFV.

This sequence belongs to the IMPDH/GMPR family. GuaC type 1 subfamily. As to quaternary structure, homotetramer.

The catalysed reaction is IMP + NH4(+) + NADP(+) = GMP + NADPH + 2 H(+). In terms of biological role, catalyzes the irreversible NADPH-dependent deamination of GMP to IMP. It functions in the conversion of nucleobase, nucleoside and nucleotide derivatives of G to A nucleotides, and in maintaining the intracellular balance of A and G nucleotides. The protein is GMP reductase of Vibrio vulnificus (strain CMCP6).